Here is a 141-residue protein sequence, read N- to C-terminus: Aspartate 1-decarboxylase (141 aa).

Serine 25 acts as the Schiff-base intermediate with substrate; via pyruvic acid in catalysis. At serine 25 the chain carries Pyruvic acid (Ser). Threonine 57 provides a ligand contact to substrate. The active-site Proton donor is the tyrosine 58. 73-75 is a binding site for substrate; the sequence is GAA.

This sequence belongs to the PanD family. As to quaternary structure, heterooctamer of four alpha and four beta subunits. Pyruvate is required as a cofactor. Post-translationally, is synthesized initially as an inactive proenzyme, which is activated by self-cleavage at a specific serine bond to produce a beta-subunit with a hydroxyl group at its C-terminus and an alpha-subunit with a pyruvoyl group at its N-terminus.

It localises to the cytoplasm. The enzyme catalyses L-aspartate + H(+) = beta-alanine + CO2. The protein operates within cofactor biosynthesis; (R)-pantothenate biosynthesis; beta-alanine from L-aspartate: step 1/1. In terms of biological role, catalyzes the pyruvoyl-dependent decarboxylation of aspartate to produce beta-alanine. This Salinispora arenicola (strain CNS-205) protein is Aspartate 1-decarboxylase.